The primary structure comprises 203 residues: ATP-dependent Clp protease proteolytic subunit 2 (203 aa).

Ser98 (nucleophile) is an active-site residue. Residue His123 is part of the active site.

It belongs to the peptidase S14 family. In terms of assembly, fourteen ClpP subunits assemble into 2 heptameric rings which stack back to back to give a disk-like structure with a central cavity, resembling the structure of eukaryotic proteasomes.

It is found in the cytoplasm. It carries out the reaction Hydrolysis of proteins to small peptides in the presence of ATP and magnesium. alpha-casein is the usual test substrate. In the absence of ATP, only oligopeptides shorter than five residues are hydrolyzed (such as succinyl-Leu-Tyr-|-NHMec, and Leu-Tyr-Leu-|-Tyr-Trp, in which cleavage of the -Tyr-|-Leu- and -Tyr-|-Trp bonds also occurs).. Functionally, cleaves peptides in various proteins in a process that requires ATP hydrolysis. Has a chymotrypsin-like activity. Plays a major role in the degradation of misfolded proteins. The sequence is that of ATP-dependent Clp protease proteolytic subunit 2 from Chlamydia muridarum (strain MoPn / Nigg).